Reading from the N-terminus, the 568-residue chain is Putative DEAD-box RNA helicase HEL64 (568 aa).

Positions 1-34 are disordered; it reads MEETYSPFTGRQGQYNQGYNGGGRRDSRGGMGER. Residues 23–34 are compositionally biased toward basic and acidic residues; that stretch reads GRRDSRGGMGER. The Q motif signature appears at 102-130; sequence FDHLCGIVPPYLLKKLTAQNFTAPTPVQA. The region spanning 133–307 is the Helicase ATP-binding domain; that stretch reads WPVLLSGRDL…AEFQKQWIRI (175 aa). 146 to 153 serves as a coordination point for ATP; that stretch reads AKTGSGKT. The short motif at 255–258 is the DEAD box element; that stretch reads DEAD. Positions 335–483 constitute a Helicase C-terminal domain; the sequence is ELRKLMQEHR…EIPDWMIEWN (149 aa).

It belongs to the DEAD box helicase family. DDX5/DBP2 subfamily.

The protein localises to the nucleus. The catalysed reaction is ATP + H2O = ADP + phosphate + H(+). The sequence is that of Putative DEAD-box RNA helicase HEL64 (HEL64) from Trypanosoma brucei brucei.